Here is a 127-residue protein sequence, read N- to C-terminus: Aspartate 1-decarboxylase (127 aa).

The Schiff-base intermediate with substrate; via pyruvic acid role is filled by serine 25. A Pyruvic acid (Ser) modification is found at serine 25. Threonine 57 provides a ligand contact to substrate. Catalysis depends on tyrosine 58, which acts as the Proton donor. 73–75 contributes to the substrate binding site; that stretch reads GAA.

This sequence belongs to the PanD family. In terms of assembly, heterooctamer of four alpha and four beta subunits. It depends on pyruvate as a cofactor. In terms of processing, is synthesized initially as an inactive proenzyme, which is activated by self-cleavage at a specific serine bond to produce a beta-subunit with a hydroxyl group at its C-terminus and an alpha-subunit with a pyruvoyl group at its N-terminus.

Its subcellular location is the cytoplasm. The catalysed reaction is L-aspartate + H(+) = beta-alanine + CO2. The protein operates within cofactor biosynthesis; (R)-pantothenate biosynthesis; beta-alanine from L-aspartate: step 1/1. In terms of biological role, catalyzes the pyruvoyl-dependent decarboxylation of aspartate to produce beta-alanine. The polypeptide is Aspartate 1-decarboxylase (Bacillus subtilis (strain 168)).